Reading from the N-terminus, the 323-residue chain is Large ribosomal subunit protein uL10 (323 aa).

Residues 296–323 (AAPAAPSAAAKEEPEESDEDDFGMGGLF) form a disordered region. The segment covering 308-317 (EPEESDEDDF) has biased composition (acidic residues).

The protein belongs to the universal ribosomal protein uL10 family. In terms of assembly, P0 forms a pentameric complex by interaction with dimers of P1 and P2. Post-translationally, phosphorylated.

Its function is as follows. Ribosomal protein P0 is the functional equivalent of E.coli protein L10. In Leishmania infantum, this protein is Large ribosomal subunit protein uL10 (LIPO-A).